Here is a 267-residue protein sequence, read N- to C-terminus: Hydroxynaphthalene reductase-like protein Arp2 (267 aa).

Positions 25, 45, 71, and 98 each coordinate NADP(+). Active-site proton donor residues include S147 and S148. Residues Y162, K166, V195, and T197 each contribute to the NADP(+) site. Y162 (proton acceptor) is an active-site residue. The active-site Lowers pKa of active site Tyr is the K166.

Belongs to the short-chain dehydrogenases/reductases (SDR) family.

Its function is as follows. Hydroxynaphthalene reductase-like protein; part of the Pks2 gene cluster that mediates the formation of infectious structures (appressoria), enabling these fungi to kill insects faster. The product of the Pks2 gene cluster is different from the one of Pks1 and has still not been identified. This Metarhizium anisopliae (strain ARSEF 549) protein is Hydroxynaphthalene reductase-like protein Arp2.